A 91-amino-acid polypeptide reads, in one-letter code: Large ribosomal subunit protein uL23c (91 aa).

It belongs to the universal ribosomal protein uL23 family. In terms of assembly, part of the 50S ribosomal subunit.

Its subcellular location is the plastid. The protein resides in the chloroplast. In terms of biological role, binds to 23S rRNA. This Anthoceros angustus (Hornwort) protein is Large ribosomal subunit protein uL23c (rpl23).